We begin with the raw amino-acid sequence, 429 residues long: Adenylosuccinate synthetase (429 aa).

Residues 12 to 18 (GDEGKGK) and 40 to 42 (GHT) contribute to the GTP site. Asp13 (proton acceptor) is an active-site residue. Asp13 and Gly40 together coordinate Mg(2+). IMP is bound by residues 13–16 (DEGK), 38–41 (NAGH), Thr129, Arg143, Gln223, Thr238, and Arg302. His41 acts as the Proton donor in catalysis. A substrate-binding site is contributed by 298 to 304 (TVTGRPR). Residues Arg304, 330–332 (KLD), and 412–414 (STS) each bind GTP.

This sequence belongs to the adenylosuccinate synthetase family. In terms of assembly, homodimer. Mg(2+) serves as cofactor.

The protein resides in the cytoplasm. The catalysed reaction is IMP + L-aspartate + GTP = N(6)-(1,2-dicarboxyethyl)-AMP + GDP + phosphate + 2 H(+). It functions in the pathway purine metabolism; AMP biosynthesis via de novo pathway; AMP from IMP: step 1/2. In terms of biological role, plays an important role in the de novo pathway of purine nucleotide biosynthesis. Catalyzes the first committed step in the biosynthesis of AMP from IMP. The protein is Adenylosuccinate synthetase of Rhodospirillum rubrum (strain ATCC 11170 / ATH 1.1.1 / DSM 467 / LMG 4362 / NCIMB 8255 / S1).